The sequence spans 81 residues: Small ribosomal subunit protein bS16 (81 aa).

Belongs to the bacterial ribosomal protein bS16 family.

The polypeptide is Small ribosomal subunit protein bS16 (Clostridium botulinum (strain Eklund 17B / Type B)).